Reading from the N-terminus, the 405-residue chain is Obg-like ATPase homolog (405 aa).

Residues 17-283 (PTSGIVGLAN…CKGIASEYFD (267 aa)) form the OBG-type G domain. Residues 26 to 31 (NVGKST) and valine 231 contribute to the ATP site. Residues 312–398 (NLISFFTCGP…QDNDIALFKA (87 aa)) enclose the TGS domain.

Belongs to the TRAFAC class OBG-HflX-like GTPase superfamily. OBG GTPase family.

The protein resides in the mitochondrion. Functionally, hydrolyzes ATP, and can also hydrolyze GTP with lower efficiency. Has lower affinity for GTP. The chain is Obg-like ATPase homolog (YLF2) from Saccharomyces cerevisiae (strain ATCC 204508 / S288c) (Baker's yeast).